The sequence spans 78 residues: MSKICQVTGKVPMVGNNRSHARNATRRRFLPNLQSHRFWVESENRFVKLRLTPKGMRIIDKKGIDVVLTDIRARGEKV.

Belongs to the bacterial ribosomal protein bL28 family.

This is Large ribosomal subunit protein bL28 from Colwellia psychrerythraea (strain 34H / ATCC BAA-681) (Vibrio psychroerythus).